Reading from the N-terminus, the 288-residue chain is ATP synthase gamma chain (288 aa).

This sequence belongs to the ATPase gamma chain family. As to quaternary structure, F-type ATPases have 2 components, CF(1) - the catalytic core - and CF(0) - the membrane proton channel. CF(1) has five subunits: alpha(3), beta(3), gamma(1), delta(1), epsilon(1). CF(0) has three main subunits: a, b and c.

The protein localises to the cell inner membrane. Produces ATP from ADP in the presence of a proton gradient across the membrane. The gamma chain is believed to be important in regulating ATPase activity and the flow of protons through the CF(0) complex. The protein is ATP synthase gamma chain of Legionella pneumophila (strain Paris).